A 219-amino-acid polypeptide reads, in one-letter code: Cyclin-U4-3 (219 aa).

The protein belongs to the cyclin family. Cyclin U/P subfamily. Interacts with CDKA-1. Expressed at low levels in roots, stems and flowers. Expressed in the shoot apex, leaf primordia and young leaves.

In Arabidopsis thaliana (Mouse-ear cress), this protein is Cyclin-U4-3 (CYCU4-3).